Consider the following 477-residue polypeptide: Adenosylhomocysteinase (477 aa).

Positions 63, 142, and 202 each coordinate substrate. 203–205 is a binding site for NAD(+); the sequence is TTT. Residues Lys232 and Asp236 each contribute to the substrate site. Residues Asn237, 266-271, Glu289, Asn324, 345-347, and Asn390 each bind NAD(+); these read GYGDVG and IGH.

It belongs to the adenosylhomocysteinase family. The cofactor is NAD(+).

It is found in the cytoplasm. It catalyses the reaction S-adenosyl-L-homocysteine + H2O = L-homocysteine + adenosine. It participates in amino-acid biosynthesis; L-homocysteine biosynthesis; L-homocysteine from S-adenosyl-L-homocysteine: step 1/1. Its function is as follows. May play a key role in the regulation of the intracellular concentration of adenosylhomocysteine. This is Adenosylhomocysteinase from Leptothrix cholodnii (strain ATCC 51168 / LMG 8142 / SP-6) (Leptothrix discophora (strain SP-6)).